Consider the following 558-residue polypeptide: EF-hand and coiled-coil domain-containing protein 1 (558 aa).

The EF-hand domain occupies 43 to 78 (GLDQYLQEVFHHLDCRGAGRLPRADFRALCAVLGLN). Positions 161 to 170 (LRRPRRRRRP) are enriched in basic residues. 2 disordered regions span residues 161–183 (LRRPRRRRRPGSPSLHGGAYGER) and 304–395 (RSEG…QPSG). 2 coiled-coil regions span residues 179 to 304 (AYGE…RGYR) and 453 to 495 (VEAE…LNIS).

The polypeptide is EF-hand and coiled-coil domain-containing protein 1 (Efcc1) (Mus musculus (Mouse)).